Here is a 234-residue protein sequence, read N- to C-terminus: MIFNCKVKKVEASDSHIYKVFIKPDKCFDFKAGQYVIVYLNGKNLPFSIANCPTCNELLELHVGGSVKESAIEAISHFINAFIYQKEFTIDAPHGDAWLRDESQSPLLLIAGGTGLSYINSILSCCISKQLSQPIYLYWGVNNCNLLYADQQLKTLAAQYRNINYIPVVENLNTDWQGKIGNVIDAVIEDFSDLSDFDIYVCGPFGMSRTAKDILISQKKANIGKMYSDAFSYT.

Gly112–Leu116 provides a ligand contact to pyridine.

It belongs to the Fre/LuxG FAD/NAD(P) flavoprotein oxidoreductase family.

In terms of biological role, probable flavin reductase in the luminescent systems of different marine bacteria. This Photobacterium leiognathi protein is Probable flavin reductase (luxG).